A 125-amino-acid chain; its full sequence is Large ribosomal subunit protein bL17 (125 aa).

It belongs to the bacterial ribosomal protein bL17 family. As to quaternary structure, part of the 50S ribosomal subunit. Contacts protein L32.

This is Large ribosomal subunit protein bL17 from Marinomonas sp. (strain MWYL1).